A 788-amino-acid chain; its full sequence is Putative wall-associated receptor kinase-like 11 (788 aa).

An N-terminal signal peptide occupies residues 1–27; the sequence is MRCDNNYSFSILFSLLLILILDSKVVS. At 28 to 375 the chain is on the extracellular side; the sequence is LSTSCQSKSV…TFNCIGNKTR (348 aa). N-linked (GlcNAc...) asparagine glycosylation is found at Asn65, Asn80, Asn121, Asn159, Asn233, Asn253, Asn278, Asn295, and Asn310. Residues 306 to 369 are atypical EGF-like; that stretch reads CICNNVTISG…CVNLPGTFNC (64 aa). Disulfide bonds link Cys308–Cys321, Cys343–Cys360, and Cys354–Cys369. The N-linked (GlcNAc...) asparagine glycan is linked to Asn372. A helical transmembrane segment spans residues 376–396; that stretch reads VTMIGVGSAFGILVLVVGIWW. At 397–788 the chain is on the cytoplasmic side; it reads LRKFLKKRRM…QPLFPHPTWI (392 aa). Residues 451-726 enclose the Protein kinase domain; sequence FSESRILGQG…KVFTDLEKIL (276 aa). ATP is bound by residues 457-465 and Lys479; that span reads LGQGGQGTV. Tyr524 bears the Phosphotyrosine mark. Catalysis depends on Asp576, which acts as the Proton acceptor. Thr610 and Thr615 each carry phosphothreonine. A Phosphotyrosine modification is found at Tyr623.

Belongs to the protein kinase superfamily. Ser/Thr protein kinase family.

Its subcellular location is the membrane. It catalyses the reaction L-seryl-[protein] + ATP = O-phospho-L-seryl-[protein] + ADP + H(+). The enzyme catalyses L-threonyl-[protein] + ATP = O-phospho-L-threonyl-[protein] + ADP + H(+). Its function is as follows. Putative serine/threonine-protein kinase that may function as a signaling receptor of extracellular matrix component. The chain is Putative wall-associated receptor kinase-like 11 (WAKL11) from Arabidopsis thaliana (Mouse-ear cress).